The following is a 245-amino-acid chain: MLIIPAIDLKDGACVRLRQGRMEDSTVFSDDPVSMAAKWVEGGCRRLHLVDLNGAFEGQPVNGEVVTAIAKRYPNLPIQIGGGIRSLETIEHYVKAGVSYVIIGTKAVKQPEFVAEACKAFPGKVIVGLDAKDGFVATDGWAEVSSVQVIDLARRFEADGVSAIVYTDIAKDGMMQGCNVPFTKALAEATRIPVIASGGIHNLGDIKALLDAKAPGIIGAITGRAIYEGTLDVAEAQAFCDNYQG.

D8 acts as the Proton acceptor in catalysis. Catalysis depends on D130, which acts as the Proton donor.

The protein belongs to the HisA/HisF family.

Its subcellular location is the cytoplasm. The enzyme catalyses 1-(5-phospho-beta-D-ribosyl)-5-[(5-phospho-beta-D-ribosylamino)methylideneamino]imidazole-4-carboxamide = 5-[(5-phospho-1-deoxy-D-ribulos-1-ylimino)methylamino]-1-(5-phospho-beta-D-ribosyl)imidazole-4-carboxamide. It participates in amino-acid biosynthesis; L-histidine biosynthesis; L-histidine from 5-phospho-alpha-D-ribose 1-diphosphate: step 4/9. This Pseudomonas putida (strain ATCC 700007 / DSM 6899 / JCM 31910 / BCRC 17059 / LMG 24140 / F1) protein is 1-(5-phosphoribosyl)-5-[(5-phosphoribosylamino)methylideneamino] imidazole-4-carboxamide isomerase.